The chain runs to 466 residues: MSIASVASVFKGEHAVGSTVTVRGWVRTRRDSKAGISFLAVYDGSCFNPIQGVVPNSLENYDNEVLKLTAGCSVIVTGEIVESPGAGQAYELQVTQVEVTGWVEDPDTYPMAAKRHSIEHLRELAHLRPRTNIIGAVARVRNCLSQAIHRFYHENGFVWVSTPLITASDCEGAGEMFRVSTLDMENLPRTSDGKVDYDKDFFGKEAFLTVSGQLNGETYACALSKIYTFGPTFRAENSNTSRHLAEFWMVEPEVAFATLSDIANLAEGMLKYAFNAVLAERMDDLQFFAQHVDKTVIERLQSFVSSDFAQVDYTDAVEILQKCGREFEFPVSWGIDLSSEHERYLAEEHFKAPVVVKNYPKDIKAFYMRLNEDGKTVAAMDVLAPGIGEIIGGSQREERLDVLDMRLEEMDLNKEDYWWYRDLRRYGTVPHAGFGLGFERLVSYVTGVSNIRDVIPFPRAPRTANF.

This sequence belongs to the class-II aminoacyl-tRNA synthetase family. In terms of assembly, homodimer.

The protein resides in the cytoplasm. It catalyses the reaction tRNA(Asn) + L-asparagine + ATP = L-asparaginyl-tRNA(Asn) + AMP + diphosphate + H(+). In Shewanella sp. (strain MR-4), this protein is Asparagine--tRNA ligase.